Here is a 246-residue protein sequence, read N- to C-terminus: Proteasome subunit alpha type-6 (246 aa).

This sequence belongs to the peptidase T1A family. In terms of assembly, the 26S proteasome consists of a 20S proteasome core and two 19S regulatory subunits. The 20S proteasome core is composed of 28 subunits that are arranged in four stacked rings, resulting in a barrel-shaped structure. The two end rings are each formed by seven alpha subunits, and the two central rings are each formed by seven beta subunits. The catalytic chamber with the active sites is on the inside of the barrel.

It localises to the cytoplasm. Its subcellular location is the nucleus. Its function is as follows. The proteasome is a multicatalytic proteinase complex which is characterized by its ability to cleave peptides with Arg, Phe, Tyr, Leu, and Glu adjacent to the leaving group at neutral or slightly basic pH. The proteasome has an ATP-dependent proteolytic activity. The polypeptide is Proteasome subunit alpha type-6 (pas-1) (Caenorhabditis elegans).